The following is a 253-amino-acid chain: Nurim homolog (253 aa).

Residues 1–2 are Nuclear-facing; it reads MA. Residues 3-30 form a helical membrane-spanning segment; sequence TFAKVMLLLSSVATFGYTFFVVGKLMLF. Residues 31–56 lie on the Perinuclear space side of the membrane; it reads LSTPRSISKAHTWIFNLLDNKSRLET. A helical transmembrane segment spans residues 57 to 78; it reads AYGPIVFDTLYLIGFIFQHSFL. The Nuclear segment spans residues 79–96; the sequence is KSALVKNLWRKLGLAAAE. A helical transmembrane segment spans residues 97–113; it reads RTIYSLTSSICLHYLLK. At 114 to 132 the chain is on the perinuclear space side; sequence NWLPAQSIVLWQVDVDESA. A helical transmembrane segment spans residues 133–161; it reads PLWWTFVVTHGLGWAVIFGGSLIMDLPEL. Residues 162–188 lie on the Nuclear side of the membrane; that stretch reads LGVKQVYYDLKEYGEPVAYKSSELRNL. A helical membrane pass occupies residues 189 to 207; it reads YSHVRHPSFVGLSVILFAT. The Perinuclear space segment spans residues 208 to 213; sequence NVMSLD. Residues 214–231 form a helical membrane-spanning segment; that stretch reads RLLLASLLTVYMYVAWST. The Nuclear portion of the chain corresponds to 232-253; it reads DDKDVAYQKQQLRNKKHELKAQ.

This sequence belongs to the nurim family.

The protein resides in the nucleus inner membrane. The protein is Nurim homolog (nrm) of Drosophila pseudoobscura pseudoobscura (Fruit fly).